Consider the following 372-residue polypeptide: Cytochrome b (372 aa).

The next 4 membrane-spanning stretches (helical) occupy residues 25 to 45 (FGSM…FLAI), 69 to 90 (WIMQ…YTHI), 105 to 125 (WLSG…GYVL), and 170 to 190 (FFAL…VHII). Heme b-binding residues include His-75 and His-89. 2 residues coordinate heme b: His-174 and His-188. A ubiquinone is bound at residue His-193. Transmembrane regions (helical) follow at residues 218-238 (YKDM…LSFS), 280-300 (LGGT…PFTH), 312-332 (LSQI…WTAS), and 339-358 (FITI…ILTP).

It belongs to the cytochrome b family. The cytochrome bc1 complex contains 3 respiratory subunits (MT-CYB, CYC1 and UQCRFS1), 2 core proteins (UQCRC1 and UQCRC2) and probably 6 low-molecular weight proteins. Requires heme b as cofactor.

Its subcellular location is the mitochondrion inner membrane. Functionally, component of the ubiquinol-cytochrome c reductase complex (complex III or cytochrome b-c1 complex) that is part of the mitochondrial respiratory chain. The b-c1 complex mediates electron transfer from ubiquinol to cytochrome c. Contributes to the generation of a proton gradient across the mitochondrial membrane that is then used for ATP synthesis. This Naja kaouthia (Monocled cobra) protein is Cytochrome b (MT-CYB).